A 286-amino-acid chain; its full sequence is Beta-lactamase SHV-34 (286 aa).

An N-terminal signal peptide occupies residues 1-21 (MRYFRLCIISLLATLPLAVHA). The active-site Acyl-ester intermediate is the Ser66. Cys73 and Cys119 are disulfide-bonded. Glu164 (proton acceptor) is an active-site residue. 230–232 (KTG) lines the substrate pocket.

The protein belongs to the class-A beta-lactamase family.

The enzyme catalyses a beta-lactam + H2O = a substituted beta-amino acid. Functionally, hydrolyzes ceftazidime and cefotaxime. The polypeptide is Beta-lactamase SHV-34 (bla) (Escherichia coli).